The following is a 301-amino-acid chain: tRNA pseudouridine synthase B (301 aa).

The Nucleophile role is filled by D45.

Belongs to the pseudouridine synthase TruB family. Type 1 subfamily.

The enzyme catalyses uridine(55) in tRNA = pseudouridine(55) in tRNA. Its function is as follows. Responsible for synthesis of pseudouridine from uracil-55 in the psi GC loop of transfer RNAs. The polypeptide is tRNA pseudouridine synthase B (Streptomyces avermitilis (strain ATCC 31267 / DSM 46492 / JCM 5070 / NBRC 14893 / NCIMB 12804 / NRRL 8165 / MA-4680)).